Here is a 564-residue protein sequence, read N- to C-terminus: Plant UBX domain-containing protein 8 (564 aa).

A2 carries the N-acetylalanine modification. In terms of domain architecture, UBA-like spans A2 to E44. UIM domains follow at residues I198–S217 and E230–E249. Residues S210–M229 form a disordered region. Disordered stretches follow at residues A267 to D358, I371 to M423, and F443 to E483. Residues F291–E300 are compositionally biased toward acidic residues. Phosphoserine is present on residues S295, S324, S326, and S328. Residues D322 to A334 show a composition bias toward basic and acidic residues. Residues F381–P395 show a composition bias toward pro residues. The stretch at V412–E478 forms a coiled coil. Over residues F443–L475 the composition is skewed to basic and acidic residues. The 79-residue stretch at D482–F560 folds into the UBX domain.

As to quaternary structure, interacts with RABA5C/ARA-4.

This is Plant UBX domain-containing protein 8 from Arabidopsis thaliana (Mouse-ear cress).